The following is a 441-amino-acid chain: Na(+)/H(+) antiporter NhaA 2 (441 aa).

Transmembrane regions (helical) follow at residues 34–54 (VGGAVLLVASAVALVWANSPW), 77–97 (LTLGTWAADGLLAVFFLVVGL), 115–135 (ALPMAAAVGGMVVPALIFVAV), 146–166 (GWAIPTATDIAFAVAVLAVIS), 176–196 (FLLTLAVVDDLLAVTVIAVFY), 199–219 (EINLTALGLSIVPLALFALCV), 225–245 (SWWLLLPLGVATWVLMHESGV), 249–269 (VAGVLLGFTVPVLRSVAAGGP), 290–310 (VAVPVFAFFAAGVAIGGVSGL), 317–337 (PITLGIILGLVVGKPVGIFLT), 355–375 (WIDVFGVALLAGIGFTVSLLI), and 389–409 (FVKVGVLTGSLVAALIAAVLL).

The protein belongs to the NhaA Na(+)/H(+) (TC 2.A.33) antiporter family.

The protein localises to the cell membrane. It catalyses the reaction Na(+)(in) + 2 H(+)(out) = Na(+)(out) + 2 H(+)(in). In terms of biological role, na(+)/H(+) antiporter that extrudes sodium in exchange for external protons. This chain is Na(+)/H(+) antiporter NhaA 2, found in Mycobacterium sp. (strain MCS).